The following is a 406-amino-acid chain: Protein ALP1-like (406 aa).

Positions 8-15 match the Nuclear localization signal motif; it reads KKKKRAEK. The 167-residue stretch at 187-353 folds into the DDE Tnp4 domain; sequence IDITHIVMNL…IIFVCCLLHN (167 aa). Residues aspartate 188, aspartate 240, and aspartate 279 each contribute to the a divalent metal cation site.

The protein belongs to the HARBI1 family. It depends on a divalent metal cation as a cofactor.

The protein resides in the nucleus. In terms of biological role, transposase-derived protein that may have nuclease activity. This is Protein ALP1-like from Arabidopsis thaliana (Mouse-ear cress).